We begin with the raw amino-acid sequence, 432 residues long: Ribosomal protein uS12 methylthiotransferase RimO (432 aa).

Positions 4–122 (NKVDIITLGC…LISDLGKSYH (119 aa)) constitute an MTTase N-terminal domain. [4Fe-4S] cluster is bound by residues Cys-13, Cys-51, Cys-85, Cys-146, Cys-150, and Cys-153. The Radical SAM core domain maps to 132-363 (TTPRHYAYVK…MRVQEGISAD (232 aa)). Residues 366–432 (ASKVGQTFRV…AFDLYGKVLN (67 aa)) enclose the TRAM domain.

This sequence belongs to the methylthiotransferase family. RimO subfamily. It depends on [4Fe-4S] cluster as a cofactor.

The protein localises to the cytoplasm. It carries out the reaction L-aspartate(89)-[ribosomal protein uS12]-hydrogen + (sulfur carrier)-SH + AH2 + 2 S-adenosyl-L-methionine = 3-methylsulfanyl-L-aspartate(89)-[ribosomal protein uS12]-hydrogen + (sulfur carrier)-H + 5'-deoxyadenosine + L-methionine + A + S-adenosyl-L-homocysteine + 2 H(+). In terms of biological role, catalyzes the methylthiolation of an aspartic acid residue of ribosomal protein uS12. The polypeptide is Ribosomal protein uS12 methylthiotransferase RimO (Parabacteroides distasonis (strain ATCC 8503 / DSM 20701 / CIP 104284 / JCM 5825 / NCTC 11152)).